The primary structure comprises 348 residues: MSELIDDFATIYPFPPKPAALTEGEKAGLRDNIARLLKACNAVIVAHYYTDPEIQALAEATGGCVADSLEMARFGSSHPATTLLVAGVRFMGETAKILSPEKTVLMPTLHAECSLDLGCPEAEFSAFCDAHPDRTVVVYANTSAAVKARADWVVTSSIAVELIDHLDSLGEKIIWAPDRHLGRYVQKQTGADMLCWQSACIVHDEFKTQALRRMKRLYPDAAVLVHPESPQAVVDLADVVGSTSQLIQAAKTLKQQQMIVATDRGIFYKMQQACPEKNLLEAPTAGEGATCRSCAHCPWMAMNGLKAIAAGLERGGVEHDIRVDEAVRQRALVPLDRMLSFAADLKRC.

Iminosuccinate is bound by residues His-47 and Ser-68. Position 113 (Cys-113) interacts with [4Fe-4S] cluster. Iminosuccinate is bound by residues 139–141 and Ser-156; that span reads YAN. Cys-200 contacts [4Fe-4S] cluster. Residues 226 to 228 and Thr-243 contribute to the iminosuccinate site; that span reads HPE. Position 297 (Cys-297) interacts with [4Fe-4S] cluster.

Belongs to the quinolinate synthase family. Type 1 subfamily. [4Fe-4S] cluster is required as a cofactor.

The protein localises to the cytoplasm. The catalysed reaction is iminosuccinate + dihydroxyacetone phosphate = quinolinate + phosphate + 2 H2O + H(+). The protein operates within cofactor biosynthesis; NAD(+) biosynthesis; quinolinate from iminoaspartate: step 1/1. In terms of biological role, catalyzes the condensation of iminoaspartate with dihydroxyacetone phosphate to form quinolinate. The polypeptide is Quinolinate synthase (Sodalis glossinidius (strain morsitans)).